The chain runs to 77 residues: Sec-independent protein translocase protein TatA (77 aa).

The helical transmembrane segment at methionine 1 to glycine 21 threads the bilayer. Residues lysine 40–glutamine 77 form a disordered region. The span at lysine 58–glutamine 77 shows a compositional bias: basic and acidic residues.

This sequence belongs to the TatA/E family. In terms of assembly, the Tat system comprises two distinct complexes: a TatABC complex, containing multiple copies of TatA, TatB and TatC subunits, and a separate TatA complex, containing only TatA subunits. Substrates initially bind to the TatABC complex, which probably triggers association of the separate TatA complex to form the active translocon.

Its subcellular location is the cell inner membrane. Functionally, part of the twin-arginine translocation (Tat) system that transports large folded proteins containing a characteristic twin-arginine motif in their signal peptide across membranes. TatA could form the protein-conducting channel of the Tat system. This chain is Sec-independent protein translocase protein TatA, found in Cupriavidus metallidurans (strain ATCC 43123 / DSM 2839 / NBRC 102507 / CH34) (Ralstonia metallidurans).